The sequence spans 189 residues: ATP synthase subunit delta (189 aa).

The protein belongs to the ATPase delta chain family. As to quaternary structure, F-type ATPases have 2 components, F(1) - the catalytic core - and F(0) - the membrane proton channel. F(1) has five subunits: alpha(3), beta(3), gamma(1), delta(1), epsilon(1). F(0) has three main subunits: a(1), b(2) and c(10-14). The alpha and beta chains form an alternating ring which encloses part of the gamma chain. F(1) is attached to F(0) by a central stalk formed by the gamma and epsilon chains, while a peripheral stalk is formed by the delta and b chains.

It localises to the cell inner membrane. Functionally, f(1)F(0) ATP synthase produces ATP from ADP in the presence of a proton or sodium gradient. F-type ATPases consist of two structural domains, F(1) containing the extramembraneous catalytic core and F(0) containing the membrane proton channel, linked together by a central stalk and a peripheral stalk. During catalysis, ATP synthesis in the catalytic domain of F(1) is coupled via a rotary mechanism of the central stalk subunits to proton translocation. In terms of biological role, this protein is part of the stalk that links CF(0) to CF(1). It either transmits conformational changes from CF(0) to CF(1) or is implicated in proton conduction. This is ATP synthase subunit delta from Methylorubrum extorquens (strain PA1) (Methylobacterium extorquens).